A 296-amino-acid polypeptide reads, in one-letter code: Iron-sulfur cluster carrier protein (296 aa).

Residues methionine 1–arginine 17 are compositionally biased toward low complexity. The disordered stretch occupies residues methionine 1–arginine 23. Glycine 52–serine 59 contributes to the ATP binding site.

The protein belongs to the Mrp/NBP35 ATP-binding proteins family. In terms of assembly, homodimer.

In terms of biological role, binds and transfers iron-sulfur (Fe-S) clusters to target apoproteins. Can hydrolyze ATP. In Saccharolobus solfataricus (strain ATCC 35092 / DSM 1617 / JCM 11322 / P2) (Sulfolobus solfataricus), this protein is Iron-sulfur cluster carrier protein.